The chain runs to 721 residues: Penicillin-binding protein activator LpoA (721 aa).

A signal peptide spans 1–26; the sequence is MVPLTFLRTKASRSLPIMLAALIFAG. Cysteine 27 is lipidated: N-palmitoyl cysteine. Residue cysteine 27 is the site of S-diacylglycerol cysteine attachment. Positions 316-330 are enriched in polar residues; the sequence is TSDLTSAQAPAQGTM. Residues 316-393 are disordered; that stretch reads TSDLTSAQAP…PAAQPQAVAA (78 aa). The span at 331–393 shows a compositional bias: low complexity; the sequence is QNPVTAPTTP…PAAQPQAVAA (63 aa).

This sequence belongs to the LpoA family. As to quaternary structure, interacts with PBP1a.

It is found in the cell outer membrane. Its function is as follows. Regulator of peptidoglycan synthesis that is essential for the function of penicillin-binding protein 1A (PBP1a). This Enterobacter sp. (strain 638) protein is Penicillin-binding protein activator LpoA.